Reading from the N-terminus, the 109-residue chain is MARDIGLNIPAPSEECDDAYCPFHGTLPVRGQILVGTVVSSKMDNTVVIERQYMKMVSKYQRYEKRRSKIHAHNPACISAKVGDIVTIAECRPISKTKSYVVVKAEVPK.

Belongs to the universal ribosomal protein uS17 family. Part of the 30S ribosomal subunit.

Its function is as follows. One of the primary rRNA binding proteins, it binds specifically to the 5'-end of 16S ribosomal RNA. In Methanosarcina acetivorans (strain ATCC 35395 / DSM 2834 / JCM 12185 / C2A), this protein is Small ribosomal subunit protein uS17A.